A 74-amino-acid polypeptide reads, in one-letter code: Salivary glue protein Sgs-7 (74 aa).

Residues 1 to 23 form the signal peptide; it reads MKLIAVTIIACILLIGFSDLALG.

In Drosophila melanogaster (Fruit fly), this protein is Salivary glue protein Sgs-7 (Sgs7).